The primary structure comprises 258 residues: uncharacterized protein (258 aa).

An N-terminal signal peptide occupies residues 1–20 (MKCFQKLYIFILILIVLMAG). A lipid anchor (N-palmitoyl cysteine) is attached at cysteine 21. Cysteine 21 is lipidated: S-diacylglycerol cysteine.

Belongs to the staphylococcal tandem lipoprotein family.

Its subcellular location is the cell membrane. This is an uncharacterized protein from Staphylococcus aureus (strain COL).